Consider the following 59-residue polypeptide: uncharacterized protein (59 aa).

The helical transmembrane segment at 7 to 27 threads the bilayer; sequence LLLLVAIALISAFALTVTGVV.

Its subcellular location is the membrane. This is an uncharacterized protein from Pyrobaculum aerophilum (strain ATCC 51768 / DSM 7523 / JCM 9630 / CIP 104966 / NBRC 100827 / IM2).